A 125-amino-acid chain; its full sequence is uncharacterized protein (125 aa).

This is an uncharacterized protein from Mycobacterium bovis (strain ATCC BAA-935 / AF2122/97).